Here is a 616-residue protein sequence, read N- to C-terminus: GPI mannosyltransferase 3 (616 aa).

Residues 1–16 (MAHEVHRIKPKLGRTQ) are Cytoplasmic-facing. The helical transmembrane segment at 17-37 (IFWVFLAFRVLNAVLTRTFFQ) threads the bilayer. Over 38 to 86 (ADEFWQALEPAHWKAFKYGELTWEWKFGVRSYLFPMIFELTYRLVSLSS) the chain is Lumenal. A helical transmembrane segment spans residues 87–107 (ILLHYALLLLSTIGSDLLILL). The Cytoplasmic portion of the chain corresponds to 108–136 (LPKYELSWQVAEDLKRLPFDVTRSFEYYG). Residues 137–157 (VIYAPKIVMAVLASIGEYYIV) traverse the membrane as a helical segment. Residues 158–188 (RFVQKLYLLTLDKRNEKEEEERRSGLSEITK) lie on the Lumenal side of the membrane. The helical transmembrane segment at 189 to 209 (FALLLSLTNFFNCFFITRTFI) threads the bilayer. Residues 210 to 240 (NSFEMILTSIALYYWDWTGGQMIKESSFTKS) lie on the Cytoplasmic side of the membrane. A helical transmembrane segment spans residues 241–261 (LIFAFLACLQRPSSGLIWVIP). Residues 262–278 (SISLILNLVGKKQYHLL) are Lumenal-facing. A helical membrane pass occupies residues 279 to 299 (FITFSKVLRSFFLVFTANAII). At 300–338 (DMYFYEKVTFPFFRFLKFNFTTPLSKFYGVAPWHFHFFQ) the chain is on the cytoplasmic side. Residues 339–359 (SLPIVLGASIPAFAFGLFFPL) traverse the membrane as a helical segment. The Lumenal segment spans residues 360–392 (SKRSFPKKYLNPFFQVKLTILLNLLVYSTLPHK). Residues 393-413 (EFRFIFPLQPLFILISSFGLL) traverse the membrane as a helical segment. Topologically, residues 414-423 (RLDRDYWKRL) are cytoplasmic. Residues 424-444 (SGLKSLLWLVPFVSVFIALLL) form a helical membrane-spanning segment. Over 445 to 616 (DTFHESGSIE…DYSDIPAADI (172 aa)) the chain is Lumenal.

It belongs to the glycosyltransferase 22 family. PIGB subfamily.

It is found in the endoplasmic reticulum membrane. It participates in glycolipid biosynthesis; glycosylphosphatidylinositol-anchor biosynthesis. Mannosyltransferase involved in glycosylphosphatidylinositol-anchor biosynthesis. Transfers the third mannose to Man2-GlcN-acyl-PI during GPI precursor assembly. This is GPI mannosyltransferase 3 (GPI10) from Saccharomyces cerevisiae (strain ATCC 204508 / S288c) (Baker's yeast).